A 337-amino-acid polypeptide reads, in one-letter code: Heat-inducible transcription repressor HrcA (337 aa).

Belongs to the HrcA family.

In terms of biological role, negative regulator of class I heat shock genes (grpE-dnaK-dnaJ and groELS operons). Prevents heat-shock induction of these operons. In Metamycoplasma arthritidis (strain 158L3-1) (Mycoplasma arthritidis), this protein is Heat-inducible transcription repressor HrcA.